Here is a 345-residue protein sequence, read N- to C-terminus: Guanine nucleotide-binding protein alpha-4 subunit (345 aa).

Residues 30 to 345 (KDVKLLLLGP…TILSQALEHF (316 aa)) enclose the G-alpha domain. The segment at 33-46 (KLLLLGPGESGKST) is G1 motif. GTP-binding positions include 38-45 (GPGESGKS), 171-177 (LRCRVRT), 196-200 (DVGGQ), 265-268 (NKKD), and alanine 320. Mg(2+) contacts are provided by serine 45 and threonine 177. Residues 169 to 177 (DVLRCRVRT) form a G2 motif region. Residues 192–201 (LKIVDVGGQR) form a G3 motif region. The tract at residues 261–268 (VLFLNKKD) is G4 motif. The G5 motif stretch occupies residues 318–323 (TCAVDT).

The protein belongs to the G-alpha family. As to quaternary structure, g proteins are composed of 3 units; alpha, beta and gamma. The alpha chain contains the guanine nucleotide binding site.

Guanine nucleotide-binding proteins (G proteins) are involved as modulators or transducers in various transmembrane signaling systems. G alpha-4 plays a role in morphogenesis of the multicellular structure. In Dictyostelium discoideum (Social amoeba), this protein is Guanine nucleotide-binding protein alpha-4 subunit (gpaD).